Reading from the N-terminus, the 401-residue chain is uncharacterized protein (401 aa).

7 helical membrane passes run 44 to 64, 69 to 89, 99 to 119, 130 to 150, 201 to 221, 246 to 266, and 286 to 306; these read LKYTIVYILALVNAFFLLVFI, LYSFGISSLTQGFARLLFVLL, LVFNIFYWLFYVIVNIPLIIF, ILSTHYVVASNVFGFIFSIIP, FIYAGIYGFVNGTSLAILYIL, ILFYVNTFILIIAILMGSFVA, and LFFSPNLIATFFSVLFTGTVV.

The protein localises to the cell membrane. This is an uncharacterized protein from Mycoplasma pneumoniae (strain ATCC 29342 / M129 / Subtype 1) (Mycoplasmoides pneumoniae).